Reading from the N-terminus, the 347-residue chain is N-acetyl-gamma-glutamyl-phosphate reductase (347 aa).

Cysteine 150 is a catalytic residue.

The protein belongs to the NAGSA dehydrogenase family. Type 1 subfamily.

It is found in the cytoplasm. It catalyses the reaction N-acetyl-L-glutamate 5-semialdehyde + phosphate + NADP(+) = N-acetyl-L-glutamyl 5-phosphate + NADPH + H(+). The protein operates within amino-acid biosynthesis; L-arginine biosynthesis; N(2)-acetyl-L-ornithine from L-glutamate: step 3/4. Catalyzes the NADPH-dependent reduction of N-acetyl-5-glutamyl phosphate to yield N-acetyl-L-glutamate 5-semialdehyde. This is N-acetyl-gamma-glutamyl-phosphate reductase from Leifsonia xyli subsp. xyli (strain CTCB07).